Reading from the N-terminus, the 453-residue chain is Probable glycine dehydrogenase (decarboxylating) subunit 1 (453 aa).

The protein belongs to the GcvP family. N-terminal subunit subfamily. In terms of assembly, the glycine cleavage system is composed of four proteins: P, T, L and H. In this organism, the P 'protein' is a heterodimer of two subunits.

It catalyses the reaction N(6)-[(R)-lipoyl]-L-lysyl-[glycine-cleavage complex H protein] + glycine + H(+) = N(6)-[(R)-S(8)-aminomethyldihydrolipoyl]-L-lysyl-[glycine-cleavage complex H protein] + CO2. The glycine cleavage system catalyzes the degradation of glycine. The P protein binds the alpha-amino group of glycine through its pyridoxal phosphate cofactor; CO(2) is released and the remaining methylamine moiety is then transferred to the lipoamide cofactor of the H protein. This Methylococcus capsulatus (strain ATCC 33009 / NCIMB 11132 / Bath) protein is Probable glycine dehydrogenase (decarboxylating) subunit 1.